Reading from the N-terminus, the 266-residue chain is Large ribosomal subunit protein eL8 (266 aa).

Residues 104 to 130 (PETKQEKKQRLLARAEQKAAGKGDTPT) show a composition bias toward basic and acidic residues. A disordered region spans residues 104-135 (PETKQEKKQRLLARAEQKAAGKGDTPTKRPPV).

This sequence belongs to the eukaryotic ribosomal protein eL8 family. Component of the large ribosomal subunit.

The protein localises to the cytoplasm. Functionally, component of the large ribosomal subunit. The ribosome is a large ribonucleoprotein complex responsible for the synthesis of proteins in the cell. This is Large ribosomal subunit protein eL8 (RPL7A) from Gallus gallus (Chicken).